A 778-amino-acid chain; its full sequence is LPS-assembly protein LptD (778 aa).

The signal sequence occupies residues 1–23 (MKTRYSVLSVAMTAAFYTQYAQA).

It belongs to the LptD family. As to quaternary structure, component of the lipopolysaccharide transport and assembly complex. Interacts with LptE and LptA.

Its subcellular location is the cell outer membrane. Its function is as follows. Together with LptE, is involved in the assembly of lipopolysaccharide (LPS) at the surface of the outer membrane. The polypeptide is LPS-assembly protein LptD (Actinobacillus pleuropneumoniae serotype 7 (strain AP76)).